The primary structure comprises 359 residues: DNA replication and repair protein RecF (359 aa).

Glycine 30–threonine 37 contacts ATP.

It belongs to the RecF family.

Its subcellular location is the cytoplasm. The RecF protein is involved in DNA metabolism; it is required for DNA replication and normal SOS inducibility. RecF binds preferentially to single-stranded, linear DNA. It also seems to bind ATP. In Vibrio atlanticus (strain LGP32) (Vibrio splendidus (strain Mel32)), this protein is DNA replication and repair protein RecF.